Reading from the N-terminus, the 756-residue chain is Pro-neuregulin-2, membrane-bound isoform (756 aa).

Residues 1–19 constitute a propeptide that is removed on maturation; the sequence is MRRDPAPGFSMLLFGVSLA. The Extracellular portion of the chain corresponds to 20 to 315; it reads CYSPSLKSVQ…KEAEELYQKR (296 aa). N-linked (GlcNAc...) asparagine glycans are attached at residues Asn55, Asn186, and Asn254. Residues 145–240 enclose the Ig-like C2-type domain; that stretch reads PKLKKMKSQT…RGRLHVNSVS (96 aa). 4 disulfides stabilise this stretch: Cys165-Cys219, Cys253-Cys267, Cys261-Cys278, and Cys280-Cys289. One can recognise an EGF-like domain in the interval 249 to 290; it reads HARKCNETAKSYCVNGGVCYYIEGINQLSCKCPVGYTGDRCQ. Residue Asn296 is glycosylated (N-linked (GlcNAc...) asparagine). A helical transmembrane segment spans residues 316–336; that stretch reads VLTITGICVALLVVGIVCVVA. Over 337 to 756 the chain is Cytoplasmic; it reads YCKTKKQRRQ…TRAKQDSGPL (420 aa). 4 disordered regions span residues 402–439, 557–578, 608–694, and 711–756; these read TFSG…SESL, LLRH…DMQR, ASPF…DGAL, and LRSD…SGPL. A compositionally biased stretch (low complexity) spans 404–416; sequence SGSHSCSPSHHCS. Over residues 424 to 437 the composition is skewed to basic and acidic residues; that stretch reads HRHESHTWSLERSE. The span at 654–682 shows a compositional bias: low complexity; sequence LNGLAAQRARAARDSLSLSSGSGCGSASA.

It belongs to the neuregulin family. As to quaternary structure, interacts with ERBB3 and ERBB4. Post-translationally, proteolytic cleavage close to the plasma membrane on the external face leads to the release of the soluble growth factor form. In terms of processing, extensive glycosylation precedes the proteolytic cleavage. Highest expression in the brain, with lower levels in the lung. In the cerebellum, found in granule and Purkinje cells.

Its subcellular location is the cell membrane. The protein localises to the secreted. Direct ligand for ERBB3 and ERBB4 tyrosine kinase receptors. Concomitantly recruits ERBB1 and ERBB2 coreceptors, resulting in ligand-stimulated tyrosine phosphorylation and activation of the ERBB receptors. May also promote the heterodimerization with the EGF receptor. This chain is Pro-neuregulin-2, membrane-bound isoform (Nrg2), found in Mus musculus (Mouse).